The chain runs to 430 residues: Enolase (430 aa).

Q163 is a binding site for (2R)-2-phosphoglycerate. E205 serves as the catalytic Proton donor. Residues D242, E285, and D312 each contribute to the Mg(2+) site. 4 residues coordinate (2R)-2-phosphoglycerate: K337, R366, S367, and K388. The Proton acceptor role is filled by K337.

Belongs to the enolase family. Requires Mg(2+) as cofactor.

The protein resides in the cytoplasm. The protein localises to the secreted. It localises to the cell surface. It carries out the reaction (2R)-2-phosphoglycerate = phosphoenolpyruvate + H2O. Its pathway is carbohydrate degradation; glycolysis; pyruvate from D-glyceraldehyde 3-phosphate: step 4/5. Its function is as follows. Catalyzes the reversible conversion of 2-phosphoglycerate (2-PG) into phosphoenolpyruvate (PEP). It is essential for the degradation of carbohydrates via glycolysis. In Maridesulfovibrio salexigens (strain ATCC 14822 / DSM 2638 / NCIMB 8403 / VKM B-1763) (Desulfovibrio salexigens), this protein is Enolase.